The chain runs to 245 residues: tRNA1(Val) (adenine(37)-N6)-methyltransferase (245 aa).

It belongs to the methyltransferase superfamily. tRNA (adenine-N(6)-)-methyltransferase family.

The protein resides in the cytoplasm. It carries out the reaction adenosine(37) in tRNA1(Val) + S-adenosyl-L-methionine = N(6)-methyladenosine(37) in tRNA1(Val) + S-adenosyl-L-homocysteine + H(+). In terms of biological role, specifically methylates the adenine in position 37 of tRNA(1)(Val) (anticodon cmo5UAC). The sequence is that of tRNA1(Val) (adenine(37)-N6)-methyltransferase from Salmonella arizonae (strain ATCC BAA-731 / CDC346-86 / RSK2980).